Here is a 447-residue protein sequence, read N- to C-terminus: MKLKKTLTYQHHAYSFLSDNTNEVLENPKEILFVKTPLNEKYAPLIAEKNLAILDFNELKNYFDFKIKIVGITGTNGKTTTASLMYSLLLDLNKKTALLGTRGFFIDDKHIKEKGLTTPTLLELYSDLEEAIRLKCEYFIMEVSSHAIVQKRIAGLDFALKILTNITSDHLDFHQNIENYRDAKNSFFKDEGLKVINRDETNALFNPINARTYALDKKAHLNVQAFSLNPSISASLCYQHDLRDPNLKETALIHSPLLGRYNLYNILAGVLGVKLLTQLPLETIAPLLENFYGVKGRLEIVHSKPLVVVDFAHTTDGMQQVFESFKNQKITALFGAGGDRDKTKRPKMGAIASCYAHQIILTSDNPRSENEEDIIKDILKGINNSSKVIVEKDRKKAILNALENLKDDEVLLILGKGDENIQIFKDKTIFFSDQEVVKDYYLNLKQG.

A UDP-N-acetyl-alpha-D-muramoyl-L-alanyl-D-glutamate-binding site is contributed by Thr-21. 74–80 is a binding site for ATP; that stretch reads GTNGKTT. Residues 117 to 118, Ser-144, Gln-150, and Arg-152 contribute to the UDP-N-acetyl-alpha-D-muramoyl-L-alanyl-D-glutamate site; that span reads TT. Lys-184 is subject to N6-carboxylysine. Residues Arg-340, 364–367, Gly-415, and Glu-419 contribute to the meso-2,6-diaminopimelate site; that span reads DNPR. Positions 364–367 match the Meso-diaminopimelate recognition motif motif; that stretch reads DNPR.

It belongs to the MurCDEF family. MurE subfamily. Mg(2+) serves as cofactor. Carboxylation is probably crucial for Mg(2+) binding and, consequently, for the gamma-phosphate positioning of ATP.

It is found in the cytoplasm. It carries out the reaction UDP-N-acetyl-alpha-D-muramoyl-L-alanyl-D-glutamate + meso-2,6-diaminopimelate + ATP = UDP-N-acetyl-alpha-D-muramoyl-L-alanyl-gamma-D-glutamyl-meso-2,6-diaminopimelate + ADP + phosphate + H(+). The protein operates within cell wall biogenesis; peptidoglycan biosynthesis. In terms of biological role, catalyzes the addition of meso-diaminopimelic acid to the nucleotide precursor UDP-N-acetylmuramoyl-L-alanyl-D-glutamate (UMAG) in the biosynthesis of bacterial cell-wall peptidoglycan. This chain is UDP-N-acetylmuramoyl-L-alanyl-D-glutamate--2,6-diaminopimelate ligase, found in Helicobacter pylori (strain J99 / ATCC 700824) (Campylobacter pylori J99).